The primary structure comprises 213 residues: Orotate phosphoribosyltransferase (213 aa).

Lys-26 serves as a coordination point for 5-phospho-alpha-D-ribose 1-diphosphate. An orotate-binding site is contributed by 34 to 35 (FF). 5-phospho-alpha-D-ribose 1-diphosphate contacts are provided by residues 72 to 73 (YK), Arg-98, Lys-99, Lys-102, His-104, and 123 to 131 (DDVISAGTS). The orotate site is built by Ser-127 and Arg-155.

This sequence belongs to the purine/pyrimidine phosphoribosyltransferase family. PyrE subfamily. As to quaternary structure, homodimer. The cofactor is Mg(2+).

The catalysed reaction is orotidine 5'-phosphate + diphosphate = orotate + 5-phospho-alpha-D-ribose 1-diphosphate. It functions in the pathway pyrimidine metabolism; UMP biosynthesis via de novo pathway; UMP from orotate: step 1/2. Catalyzes the transfer of a ribosyl phosphate group from 5-phosphoribose 1-diphosphate to orotate, leading to the formation of orotidine monophosphate (OMP). This Neisseria meningitidis serogroup C (strain 053442) protein is Orotate phosphoribosyltransferase.